Reading from the N-terminus, the 150-residue chain is Endoribonuclease YbeY (150 aa).

The Zn(2+) site is built by H112, H116, and H122.

It belongs to the endoribonuclease YbeY family. Zn(2+) is required as a cofactor.

It is found in the cytoplasm. Its function is as follows. Single strand-specific metallo-endoribonuclease involved in late-stage 70S ribosome quality control and in maturation of the 3' terminus of the 16S rRNA. This chain is Endoribonuclease YbeY, found in Geobacter sulfurreducens (strain ATCC 51573 / DSM 12127 / PCA).